The primary structure comprises 421 residues: MKDFADIPALMAEIGTAAKAAAAELAFAPADQRAQALTAAADAVWARRDEIIAANARDLDYGRDKGLSPAMMDRLALDEARIQGIVDGLRAVAAQDDPVGAVLSEWDRPTGLHIRRVRTPLGVIGVIYESRPNVTADAGALCLKSGNAVILRGGSESFHSSSLIHACLRDGLRAADLPETAIQLVPTRDRAAVGEMLTMTDTIDVIIPRGGKGLVGRVQAEARVPVFAHLEGICHIYVDADADPDKTARVILNAKTRRTGICGAAECLLVDRAWYDRNGATFIADLIAAGVEVRADDTLQAIPGTVPAKADDFGREFLDMIIAARVVDGVDGAIAHIRRYGSQHTDCILTENDATAARFFQRLDSAILMRNASTQFADGGEFGMGAEIGIATGKMHARGPVGAEQLTSFKYLVEGDGTIRA.

The protein belongs to the gamma-glutamyl phosphate reductase family.

Its subcellular location is the cytoplasm. It carries out the reaction L-glutamate 5-semialdehyde + phosphate + NADP(+) = L-glutamyl 5-phosphate + NADPH + H(+). The protein operates within amino-acid biosynthesis; L-proline biosynthesis; L-glutamate 5-semialdehyde from L-glutamate: step 2/2. Functionally, catalyzes the NADPH-dependent reduction of L-glutamate 5-phosphate into L-glutamate 5-semialdehyde and phosphate. The product spontaneously undergoes cyclization to form 1-pyrroline-5-carboxylate. In Dinoroseobacter shibae (strain DSM 16493 / NCIMB 14021 / DFL 12), this protein is Gamma-glutamyl phosphate reductase.